We begin with the raw amino-acid sequence, 97 residues long: Large ribosomal subunit protein uL23 (97 aa).

Belongs to the universal ribosomal protein uL23 family. Part of the 50S ribosomal subunit. Contacts protein L29, and trigger factor when it is bound to the ribosome.

Its function is as follows. One of the early assembly proteins it binds 23S rRNA. One of the proteins that surrounds the polypeptide exit tunnel on the outside of the ribosome. Forms the main docking site for trigger factor binding to the ribosome. This chain is Large ribosomal subunit protein uL23, found in Brucella anthropi (strain ATCC 49188 / DSM 6882 / CCUG 24695 / JCM 21032 / LMG 3331 / NBRC 15819 / NCTC 12168 / Alc 37) (Ochrobactrum anthropi).